Reading from the N-terminus, the 231-residue chain is UPF0173 metal-dependent hydrolase AF_1265 (231 aa).

Belongs to the UPF0173 family.

This is UPF0173 metal-dependent hydrolase AF_1265 from Archaeoglobus fulgidus (strain ATCC 49558 / DSM 4304 / JCM 9628 / NBRC 100126 / VC-16).